The sequence spans 195 residues: Imidazoleglycerol-phosphate dehydratase (195 aa).

It belongs to the imidazoleglycerol-phosphate dehydratase family.

The protein resides in the cytoplasm. It carries out the reaction D-erythro-1-(imidazol-4-yl)glycerol 3-phosphate = 3-(imidazol-4-yl)-2-oxopropyl phosphate + H2O. It functions in the pathway amino-acid biosynthesis; L-histidine biosynthesis; L-histidine from 5-phospho-alpha-D-ribose 1-diphosphate: step 6/9. The protein is Imidazoleglycerol-phosphate dehydratase of Paraburkholderia phymatum (strain DSM 17167 / CIP 108236 / LMG 21445 / STM815) (Burkholderia phymatum).